The following is a 182-amino-acid chain: NADH-quinone oxidoreductase subunit B 2 (182 aa).

[4Fe-4S] cluster-binding residues include C55, C56, C120, and C150.

Belongs to the complex I 20 kDa subunit family. NDH-1 is composed of 14 different subunits. Subunits NuoB, C, D, E, F, and G constitute the peripheral sector of the complex. Requires [4Fe-4S] cluster as cofactor.

The protein resides in the cell inner membrane. It carries out the reaction a quinone + NADH + 5 H(+)(in) = a quinol + NAD(+) + 4 H(+)(out). Functionally, NDH-1 shuttles electrons from NADH, via FMN and iron-sulfur (Fe-S) centers, to quinones in the respiratory chain. The immediate electron acceptor for the enzyme in this species is believed to be ubiquinone. Couples the redox reaction to proton translocation (for every two electrons transferred, four hydrogen ions are translocated across the cytoplasmic membrane), and thus conserves the redox energy in a proton gradient. The polypeptide is NADH-quinone oxidoreductase subunit B 2 (Sorangium cellulosum (strain So ce56) (Polyangium cellulosum (strain So ce56))).